Consider the following 501-residue polypeptide: MKYILSIDQGTTSSRAMVFDKNANIKGFAQKEFTQIYPQPSWVEHDPTEIWGSQLGVITEAMANARILPNEIDAIGITNQRETTVIWEKNTGKPIYNAIVWQDRRTAKICDQLKKEGKDKIILEKTGLVLDSYFSGTKIMWILDNVEGARQRAENGELCFGTIDTWILWNLTQKKEHATDYSNASRTLLLNIKTLEWDDELLSILNVPRAILPELKESSTIYGKTDKALFGAEIPIAGIAGDQFAATFGQACLKKGMAKNTYGTGCFLTVNIGKEPIISHDKLLTSIAWGRKKSVTYVLEGSVFIGGAVIQWLRDGLEFFRKSSDAEALASSVSDNGGVYFVPAFVGLGAPHWDSYARGTIIGITRGSTKAHITRAALESIAFQSFDILNTMKKSIPNFEIQELRVDGGASQNNLLMQFQADLLECKVVRPKITETTALGAAYLAGLATGYWQSAEEIVSLWQVDKIFEPSMPKNQKEKLLENWNKAVGKAKSWIQNSHSS.

Residue threonine 11 coordinates ADP. ATP is bound by residues threonine 11, threonine 12, and serine 13. Threonine 11 lines the sn-glycerol 3-phosphate pocket. An ADP-binding site is contributed by arginine 15. Residues arginine 81, glutamate 82, tyrosine 133, and aspartate 242 each contribute to the sn-glycerol 3-phosphate site. Glycerol contacts are provided by arginine 81, glutamate 82, tyrosine 133, aspartate 242, and glutamine 243. Residues threonine 264 and glycine 307 each contribute to the ADP site. 4 residues coordinate ATP: threonine 264, glycine 307, glutamine 311, and glycine 409. The ADP site is built by glycine 409 and asparagine 413.

The protein belongs to the FGGY kinase family.

The enzyme catalyses glycerol + ATP = sn-glycerol 3-phosphate + ADP + H(+). It participates in polyol metabolism; glycerol degradation via glycerol kinase pathway; sn-glycerol 3-phosphate from glycerol: step 1/1. Inhibited by fructose 1,6-bisphosphate (FBP). Functionally, key enzyme in the regulation of glycerol uptake and metabolism. Catalyzes the phosphorylation of glycerol to yield sn-glycerol 3-phosphate. This chain is Glycerol kinase, found in Borreliella burgdorferi (strain ATCC 35210 / DSM 4680 / CIP 102532 / B31) (Borrelia burgdorferi).